We begin with the raw amino-acid sequence, 535 residues long: Beta-hexosaminidase 3 (535 aa).

The signal sequence occupies residues 1–24; it reads MRGSGAKIAGVLPLFMLFIAGTIS. Asn92 is a glycosylation site (N-linked (GlcNAc...) asparagine). A disulfide bridge links Cys292 with Cys334. Residue Glu329 is the Proton donor of the active site. Asn331, Asn405, Asn441, and Asn496 each carry an N-linked (GlcNAc...) asparagine glycan. Cys506 and Cys532 form a disulfide bridge.

The protein belongs to the glycosyl hydrolase 20 family. N-glycosylated. Expressed in roots, leaves, stems, flowers and siliques.

It localises to the cell membrane. The catalysed reaction is Hydrolysis of terminal non-reducing N-acetyl-D-hexosamine residues in N-acetyl-beta-D-hexosaminides.. Slightly inhibited by N-acetylcastanospermine. Its function is as follows. Has a broad substrate specificity. Can use synthetic substrates such as pyridylaminated chitotriose, p-nitrophenyl-beta-N-acetylglucosaminide, p-nitrophenyl-2-acetamido-2-deoxy-beta-D-glucopyranoside (pNP-GlcNAc), p-nitrophenyl-2-acetamido-2-deoxy-beta-D-galactopyranoside (pNP-GalNAc), 4-methylumbelliferyl-2-acetamido-2-deoxy-beta-D-glucopyranoside (MU-GlcNAc), and 4-methylumbelliferyl-6-sulfo-2-acetamido-2-deoxy-beta-D-glucopyranoside (MU-GlcNAc-6SO(4)) as substrates. Removes terminal GlcNAc residues from alpha1,3- and alpha1,6-mannosyl branches of biantennary N-glycans without any strict branch preference. Required for the presence of paucimannosidic N-glycans in glycoproteins of roots and leaves. This is Beta-hexosaminidase 3 (HEXO3) from Arabidopsis thaliana (Mouse-ear cress).